A 549-amino-acid chain; its full sequence is Solute carrier family 22 member 6 (549 aa).

Topologically, residues 1-23 (MAFNDLLLQLGGVGRFQKIQVTL) are cytoplasmic. Residues 24 to 44 (VILPLILLASHNTLQNFTAAI) traverse the membrane as a helical segment. Topologically, residues 45 to 135 (PTHHCRPPAD…LVCSHRALRQ (91 aa)) are extracellular. N-linked (GlcNAc...) asparagine glycans are attached at residues Asn56, Asn92, and Asn113. The chain crosses the membrane as a helical span at residues 136-156 (LAQSLYMMGVLLGAMTFGCLA). The Cytoplasmic segment spans residues 157-164 (DRLGRRKV). Residues 165-185 (LIFNYLQTAVSGTCAAFAPNF) form a helical membrane-spanning segment. Topologically, residues 186 to 195 (PAYCAFRFLS) are extracellular. A helical transmembrane segment spans residues 196–216 (GMSTAGVVLNCMTLNVEWMPI). Residues 217–224 (HTRAYVGT) lie on the Cytoplasmic side of the membrane. Residues 225–245 (LTGYVYSLGQFLLAGMAYAVP) traverse the membrane as a helical segment. The Extracellular portion of the chain corresponds to 246–248 (HWR). The chain crosses the membrane as a helical span at residues 249–269 (YLQLLVSAPFFAFFIYSWFFI). Residues 270 to 337 (ESARWYASSG…ELIRCPALRR (68 aa)) are Cytoplasmic-facing. A helical membrane pass occupies residues 338 to 358 (LFLCLSMLWFATSFAYYGLVM). Residues 359 to 368 (DLQGFGVSIY) lie on the Extracellular side of the membrane. The chain crosses the membrane as a helical span at residues 369 to 389 (LIQVIFGAVDLPAKLVSFLVI). At 390 to 395 (NNVGRR) the chain is on the cytoplasmic side. The chain crosses the membrane as a helical span at residues 396–416 (PAQMASLLLAGICILINGVVP). Topologically, residues 417-425 (KDKSIVRTS) are extracellular. The helical transmembrane segment at 426–446 (LAVLGKGCLASSFNCIFLYTG) threads the bilayer. Residues 447–456 (EVYPTMIRQT) are Cytoplasmic-facing. A helical transmembrane segment spans residues 457-477 (GLGMGSTLARVGSIVSPLVSM). The Extracellular segment spans residues 478–484 (TAELYPS). The helical transmembrane segment at 485–505 (VPLFIYGAVPVAASAAIALLP) threads the bilayer. Residues 506-549 (ETLGQPLPDTVQDVENRRRGKTRKQQEELQKQMVPLQASAQVKN) lie on the Cytoplasmic side of the membrane. The interval 521 to 549 (NRRRGKTRKQQEELQKQMVPLQASAQVKN) is disordered.

Belongs to the major facilitator (TC 2.A.1) superfamily. Organic cation transporter (TC 2.A.1.19) family. Post-translationally, glycosylated. Glycosylation is necessary for proper targeting of the transporter to the plasma membrane.

The protein resides in the basolateral cell membrane. It is found in the basal cell membrane. The enzyme catalyses (6R)-L-erythro-5,6,7,8-tetrahydrobiopterin(out) + a dicarboxylate(in) = (6R)-L-erythro-5,6,7,8-tetrahydrobiopterin(in) + a dicarboxylate(out). It carries out the reaction L-erythro-7,8-dihydrobiopterin(out) + a dicarboxylate(in) = L-erythro-7,8-dihydrobiopterin(in) + a dicarboxylate(out). It catalyses the reaction L-sepiapterin(out) + a dicarboxylate(in) = L-sepiapterin(in) + a dicarboxylate(out). The catalysed reaction is prostaglandin F2alpha(out) + a dicarboxylate(in) = prostaglandin F2alpha(in) + a dicarboxylate(out). The enzyme catalyses prostaglandin E2(out) + a dicarboxylate(in) = prostaglandin E2(in) + a dicarboxylate(out). It carries out the reaction 3',5'-cyclic AMP(out) + a dicarboxylate(in) = 3',5'-cyclic AMP(in) + a dicarboxylate(out). It catalyses the reaction 3',5'-cyclic GMP(out) + a dicarboxylate(in) = 3',5'-cyclic GMP(in) + a dicarboxylate(out). The catalysed reaction is urate(out) + a dicarboxylate(in) = urate(in) + a dicarboxylate(out). The enzyme catalyses kynurenate(out) + glutarate(in) = kynurenate(in) + glutarate(out). It carries out the reaction (indol-3-yl)acetate(out) + a dicarboxylate(in) = (indol-3-yl)acetate(in) + a dicarboxylate(out). It catalyses the reaction indoxyl sulfate(out) + a dicarboxylate(in) = indoxyl sulfate(in) + a dicarboxylate(out). The catalysed reaction is N-benzoylglycine(out) + a dicarboxylate(in) = N-benzoylglycine(in) + a dicarboxylate(out). The enzyme catalyses 3-carboxy-4-methyl-5-propyl-2-furanpropanoate(out) + a dicarboxylate(in) = 3-carboxy-4-methyl-5-propyl-2-furanpropanoate(in) + a dicarboxylate(out). In terms of biological role, secondary active transporter that functions as a Na(+)-independent organic anion (OA)/dicarboxylate antiporter where the uptake of one molecule of OA into the cell is coupled with an efflux of one molecule of intracellular dicarboxylate such as 2-oxoglutarate or glutarate. Mediates the uptake of OA across the basolateral side of proximal tubule epithelial cells, thereby contributing to the renal elimination of endogenous OA from the systemic circulation into the urine. Functions as a biopterin transporters involved in the uptake and the secretion of coenzymes tetrahydrobiopterin (BH4), dihydrobiopterin (BH2) and sepiapterin to urine, thereby determining baseline levels of blood biopterins. Transports prostaglandin E2 (PGE2) and prostaglandin F2-alpha (PGF2-alpha) and may contribute to their renal excretion. Also mediates the uptake of cyclic nucleotides such as cAMP and cGMP. Involved in the transport of neuroactive tryptophan metabolites kynurenate (KYNA) and xanthurenate (XA) and may contribute to their secretion from the brain. May transport glutamate. Also involved in the disposition of uremic toxins and potentially toxic xenobiotics by the renal organic anion secretory pathway, helping reduce their undesired toxicological effects on the body. Uremic toxins include the indoxyl sulfate (IS), hippurate/N-benzoylglycine (HA), indole acetate (IA), 3-carboxy-4- methyl-5-propyl-2-furanpropionate (CMPF) and urate. Xenobiotics include the mycotoxin ochratoxin (OTA). May also contribute to the transport of organic compounds in testes across the blood-testis-barrier. The sequence is that of Solute carrier family 22 member 6 from Bos taurus (Bovine).